We begin with the raw amino-acid sequence, 196 residues long: Holliday junction branch migration complex subunit RuvA (196 aa).

Residues 1 to 63 (MYDYIKGTLV…DDAHLLFGFH (63 aa)) form a domain I region. Positions 64 to 142 (TEDEKEVFLK…ELPAETTNTT (79 aa)) are domain II. The flexible linker stretch occupies residues 143–146 (ANQT). Residues 147-196 (AGNQQLDEAMEALLALGYKSTELKKVKAFFEDTNETAEQYIKSALKMLMK) are domain III.

It belongs to the RuvA family. In terms of assembly, homotetramer. Forms an RuvA(8)-RuvB(12)-Holliday junction (HJ) complex. HJ DNA is sandwiched between 2 RuvA tetramers; dsDNA enters through RuvA and exits via RuvB. An RuvB hexamer assembles on each DNA strand where it exits the tetramer. Each RuvB hexamer is contacted by two RuvA subunits (via domain III) on 2 adjacent RuvB subunits; this complex drives branch migration. In the full resolvosome a probable DNA-RuvA(4)-RuvB(12)-RuvC(2) complex forms which resolves the HJ.

It is found in the cytoplasm. The RuvA-RuvB-RuvC complex processes Holliday junction (HJ) DNA during genetic recombination and DNA repair, while the RuvA-RuvB complex plays an important role in the rescue of blocked DNA replication forks via replication fork reversal (RFR). RuvA specifically binds to HJ cruciform DNA, conferring on it an open structure. The RuvB hexamer acts as an ATP-dependent pump, pulling dsDNA into and through the RuvAB complex. HJ branch migration allows RuvC to scan DNA until it finds its consensus sequence, where it cleaves and resolves the cruciform DNA. The protein is Holliday junction branch migration complex subunit RuvA of Streptococcus thermophilus (strain CNRZ 1066).